We begin with the raw amino-acid sequence, 319 residues long: Beta-ketoacyl-[acyl-carrier-protein] synthase III (319 aa).

Active-site residues include Cys113 and His246. Residues 247-251 are ACP-binding; that stretch reads QANLR. Asn276 is a catalytic residue.

Belongs to the thiolase-like superfamily. FabH family. As to quaternary structure, homodimer.

The protein localises to the cytoplasm. The catalysed reaction is malonyl-[ACP] + acetyl-CoA + H(+) = 3-oxobutanoyl-[ACP] + CO2 + CoA. Its pathway is lipid metabolism; fatty acid biosynthesis. In terms of biological role, catalyzes the condensation reaction of fatty acid synthesis by the addition to an acyl acceptor of two carbons from malonyl-ACP. Catalyzes the first condensation reaction which initiates fatty acid synthesis and may therefore play a role in governing the total rate of fatty acid production. Possesses both acetoacetyl-ACP synthase and acetyl transacylase activities. Its substrate specificity determines the biosynthesis of branched-chain and/or straight-chain of fatty acids. This chain is Beta-ketoacyl-[acyl-carrier-protein] synthase III, found in Chromobacterium violaceum (strain ATCC 12472 / DSM 30191 / JCM 1249 / CCUG 213 / NBRC 12614 / NCIMB 9131 / NCTC 9757 / MK).